We begin with the raw amino-acid sequence, 386 residues long: MKLHEYQGKEVLRDFGVNVQDGKVATTPEEVQAIYKEYGQPVVVKAQVHVGGRGKAGGVKYSANEDKALENAKNILGMDIKGLTVNKVLVTKAVDIDAGTEYYVGMIVDRNVQSYTLMASAEGGMEIEEVAATNPEKIIRHRVDPVTGLRPYEAREVAIKAGFRGNLNKIADMMVKMSKAALERDAVLVEINPLFVDADGTPIALDTKFEIDDNAMYRHKDLAHYRELSAEHPLEVEASDYGFAYVKLDDGNVGVLGNGAGIVMTTLDVVNRAGAKPANFLDIGGGAKADVVYNAVKLVSKDPDVKAIFINIFGGITRADEVAKGVIRALDEGILTKPVRMRIAGTAEDEAKALLNEKNSDLIKMYPTMFEAANEAAKEANALGGK.

Residues 9-237 (KEVLRDFGVN…LSAEHPLEVE (229 aa)) enclose the ATP-grasp domain. ATP contacts are provided by residues K45, 52–54 (GRG), V94, and E101. Residues N192 and D206 each contribute to the Mg(2+) site. Substrate is bound by residues N258 and 315–317 (GIT).

Belongs to the succinate/malate CoA ligase beta subunit family. Heterotetramer of two alpha and two beta subunits. Requires Mg(2+) as cofactor.

The catalysed reaction is succinate + ATP + CoA = succinyl-CoA + ADP + phosphate. It carries out the reaction GTP + succinate + CoA = succinyl-CoA + GDP + phosphate. The protein operates within carbohydrate metabolism; tricarboxylic acid cycle; succinate from succinyl-CoA (ligase route): step 1/1. Succinyl-CoA synthetase functions in the citric acid cycle (TCA), coupling the hydrolysis of succinyl-CoA to the synthesis of either ATP or GTP and thus represents the only step of substrate-level phosphorylation in the TCA. The beta subunit provides nucleotide specificity of the enzyme and binds the substrate succinate, while the binding sites for coenzyme A and phosphate are found in the alpha subunit. The polypeptide is Succinate--CoA ligase [ADP-forming] subunit beta (Deinococcus radiodurans (strain ATCC 13939 / DSM 20539 / JCM 16871 / CCUG 27074 / LMG 4051 / NBRC 15346 / NCIMB 9279 / VKM B-1422 / R1)).